The chain runs to 293 residues: MNVERDQHISPPCLLTKKIPIVDLSDPSDELVAHAVVKASEEWGIFQLVNHGIPAELMRRLQEVGRQFFELPASEKESVTRPADSQDIEGFFSKDPKKLKAWDDHLIHNIWPPSSINYRYWPNNPSDYSGDGFREVTKEYTRNVTNLTEKIVGGDKAQYVMRINYYPPSDSAIGAPAHTDFCGLALLVSNEVPGLQVFKDDHWFDVEYINSAVIVLIGDQIMRMSNGKYKNVLHRSIMDAKKTRMSWPILVEPKRGLVVGPLPELTGDENPPKFESLTFEDYVYRKIIKVLRD.

Residues 156–253 enclose the Fe2OG dioxygenase domain; sequence KAQYVMRINY…RMSWPILVEP (98 aa). A 2-oxoglutarate-binding site is contributed by 164 to 166; that stretch reads NYY. The Fe cation site is built by histidine 178, aspartate 180, and histidine 234. Residue 244–246 participates in 2-oxoglutarate binding; it reads RMS.

This sequence belongs to the iron/ascorbate-dependent oxidoreductase family. Fe(2+) is required as a cofactor.

The enzyme catalyses a (2R,3R)-dihydroflavonol + 2-oxoglutarate + O2 = a flavonol + succinate + CO2 + H2O. It participates in secondary metabolite biosynthesis; flavonoid biosynthesis. The sequence is that of Probable flavonol synthase 6 (FLS6) from Arabidopsis thaliana (Mouse-ear cress).